We begin with the raw amino-acid sequence, 442 residues long: UDP-N-acetylmuramoylalanine--D-glutamate ligase (442 aa).

113–119 (GSNGKTT) contacts ATP.

This sequence belongs to the MurCDEF family.

Its subcellular location is the cytoplasm. It carries out the reaction UDP-N-acetyl-alpha-D-muramoyl-L-alanine + D-glutamate + ATP = UDP-N-acetyl-alpha-D-muramoyl-L-alanyl-D-glutamate + ADP + phosphate + H(+). Its pathway is cell wall biogenesis; peptidoglycan biosynthesis. Its function is as follows. Cell wall formation. Catalyzes the addition of glutamate to the nucleotide precursor UDP-N-acetylmuramoyl-L-alanine (UMA). This Coxiella burnetii (strain CbuG_Q212) (Coxiella burnetii (strain Q212)) protein is UDP-N-acetylmuramoylalanine--D-glutamate ligase.